The sequence spans 508 residues: MGLPWYRVHTVVLNDPGRLISVHIMHTGLVSGWAGSMAFYELAVFDPSDPVLNPMWRQGMFVLPFMTRLGISKSWGGWDINGDSITDPGLWSYEGVAATHIILAGLMFLASMWHWVYWDLELFRDPRTGKPALDLPKIFGIHLFLSGLLCFGFGAFHVTGLFGPGIWVSDPYGITGRVQPIEPSWGADGFDPFNPGGIASHHIAAGILGILAGLFHLSVRPSFRLYKALRMGNVETVLSSSIAAVFWAAFVVSGTMWYGSAATPIELFGPTRYQWDLGYFNKEINKRVQASIASGSTASEAWSRIPEKLAFYDYIGNNPAKGGLFRAGAMNNGDGIAAGWLGHAVFKDKEGRELFVRRMPTFFETFPVVLLDKDGIVRADIPFRRAESKYSIEQVGVSVAFYGGELDGVTFKDPTTVKKYARRAQLGEIFEFDRARLKSDGVFRSSPRGWFTFGHLCFALLFFFGHIWHGARTIFRDVFAGIDPDLDEQVEFGAFQKLGDASTRKQAV.

The next 6 helical transmembrane spans lie at 21-36 (SVHI…WAGS), 101-115 (IILA…MWHW), 140-156 (GIHL…FGAF), 203-218 (IAAG…FHLS), 237-252 (VLSS…AFVV), and 457-472 (CFAL…HGAR).

This sequence belongs to the PsbB/PsbC family. PsbB subfamily. PSII is composed of 1 copy each of membrane proteins PsbA, PsbB, PsbC, PsbD, PsbE, PsbF, PsbH, PsbI, PsbJ, PsbK, PsbL, PsbM, PsbT, PsbX, PsbY, PsbZ, Psb30/Ycf12, at least 3 peripheral proteins of the oxygen-evolving complex and a large number of cofactors. It forms dimeric complexes. The cofactor is Binds multiple chlorophylls. PSII binds additional chlorophylls, carotenoids and specific lipids..

It localises to the plastid. It is found in the chloroplast thylakoid membrane. One of the components of the core complex of photosystem II (PSII). It binds chlorophyll and helps catalyze the primary light-induced photochemical processes of PSII. PSII is a light-driven water:plastoquinone oxidoreductase, using light energy to abstract electrons from H(2)O, generating O(2) and a proton gradient subsequently used for ATP formation. The polypeptide is Photosystem II CP47 reaction center protein (Mesostigma viride (Green alga)).